The primary structure comprises 147 residues: MSMSTSTEIIAHHWAFAIFLIIAIGLCCLMLVGGWFLGGRARARSKNTPFESGIDSVGSARLRLSAKFYLVAMFFVIFDVEALYLFAWSTSIRESGWVGFVEAAIFIFVLLAGLVYLVRIGALDWTPARSRRERMNPETNSIANRQR.

3 consecutive transmembrane segments (helical) span residues 16–36 (FAIFLIIAIGLCCLMLVGGWF), 68–88 (FYLVAMFFVIFDVEALYLFAW), and 98–118 (VGFVEAAIFIFVLLAGLVYLV).

It belongs to the complex I subunit 3 family. As to quaternary structure, NDH-1 is composed of 13 different subunits. Subunits NuoA, H, J, K, L, M, N constitute the membrane sector of the complex.

Its subcellular location is the cell inner membrane. It catalyses the reaction a quinone + NADH + 5 H(+)(in) = a quinol + NAD(+) + 4 H(+)(out). Functionally, NDH-1 shuttles electrons from NADH, via FMN and iron-sulfur (Fe-S) centers, to quinones in the respiratory chain. The immediate electron acceptor for the enzyme in this species is believed to be ubiquinone. Couples the redox reaction to proton translocation (for every two electrons transferred, four hydrogen ions are translocated across the cytoplasmic membrane), and thus conserves the redox energy in a proton gradient. This Citrobacter koseri (strain ATCC BAA-895 / CDC 4225-83 / SGSC4696) protein is NADH-quinone oxidoreductase subunit A.